The sequence spans 253 residues: MAQVAIITASDSGIGKECALLLAQQGFDIGITWHSDEEGAKDTAREVVSHGVRAEIVQLDLGNLPEGALALEKLIQRLGRIDVLVNNAGAMTKAPFLDMAFDEWRKIFTVDVDGAFLCSQIAARQMVKQGQGGRIINITSVHEHTPLPDASAYTAAKHALGGLTKAMALELVRHKILVNAVAPGAIATPMNGMDDSDVKPDAEPSIPLRRFGATHEIASLVVWLCSEGANYTTGQSLIVDGGFMLANPQFNPE.

6–30 (IITASDSGIGKECALLLAQQGFDIG) contributes to the NADP(+) binding site. Position 140 (Ser140) interacts with substrate. The Proton acceptor role is filled by Tyr153.

The protein belongs to the short-chain dehydrogenases/reductases (SDR) family.

This is an uncharacterized protein from Escherichia coli (strain K12).